A 473-amino-acid polypeptide reads, in one-letter code: Bifunctional protein HldE (473 aa).

The interval 1-318 is ribokinase; it reads MKLTLPRYDQ…RAVQREEGSE (318 aa). 194–197 serves as a coordination point for ATP; the sequence is NLHE. Asp-263 is an active-site residue. Residues 343 to 473 are cytidylyltransferase; that stretch reads FTNGCFDILH…TAIVEKIRNK (131 aa).

In the N-terminal section; belongs to the carbohydrate kinase PfkB family. This sequence in the C-terminal section; belongs to the cytidylyltransferase family. As to quaternary structure, homodimer.

It carries out the reaction D-glycero-beta-D-manno-heptose 7-phosphate + ATP = D-glycero-beta-D-manno-heptose 1,7-bisphosphate + ADP + H(+). The enzyme catalyses D-glycero-beta-D-manno-heptose 1-phosphate + ATP + H(+) = ADP-D-glycero-beta-D-manno-heptose + diphosphate. It participates in nucleotide-sugar biosynthesis; ADP-L-glycero-beta-D-manno-heptose biosynthesis; ADP-L-glycero-beta-D-manno-heptose from D-glycero-beta-D-manno-heptose 7-phosphate: step 1/4. The protein operates within nucleotide-sugar biosynthesis; ADP-L-glycero-beta-D-manno-heptose biosynthesis; ADP-L-glycero-beta-D-manno-heptose from D-glycero-beta-D-manno-heptose 7-phosphate: step 3/4. Its function is as follows. Catalyzes the phosphorylation of D-glycero-D-manno-heptose 7-phosphate at the C-1 position to selectively form D-glycero-beta-D-manno-heptose-1,7-bisphosphate. Catalyzes the ADP transfer from ATP to D-glycero-beta-D-manno-heptose 1-phosphate, yielding ADP-D-glycero-beta-D-manno-heptose. The polypeptide is Bifunctional protein HldE (Ectopseudomonas mendocina (strain ymp) (Pseudomonas mendocina)).